Here is a 91-residue protein sequence, read N- to C-terminus: Small ribosomal subunit protein bS16 (91 aa).

It belongs to the bacterial ribosomal protein bS16 family.

The chain is Small ribosomal subunit protein bS16 from Staphylococcus epidermidis (strain ATCC 35984 / DSM 28319 / BCRC 17069 / CCUG 31568 / BM 3577 / RP62A).